The sequence spans 103 residues: MSALTKASGALKSVDYEVFGRVQGVCFRMYTEEEARKLGVVGWVKNTRQGTVTGQVQGPEDKVNAMKSWLSKVGSPSSRIDRTNFSNEKEISKLDFSGFSTRY.

Ser-2 carries the post-translational modification N-acetylserine. One can recognise an Acylphosphatase-like domain in the interval 13–103; sequence SVDYEVFGRV…LDFSGFSTRY (91 aa). Cys-26 carries the post-translational modification S-glutathionyl cysteine; alternate. Catalysis depends on residues Arg-28 and Asn-46.

The protein belongs to the acylphosphatase family. Monomer (TU1) or homodimer (TU3) in absence of reducing factors; disulfide linked.

It carries out the reaction an acyl phosphate + H2O = a carboxylate + phosphate + H(+). Functionally, its physiological role is not yet clear. This chain is Acylphosphatase-2 (ACYP2), found in Meleagris gallopavo (Wild turkey).